The sequence spans 180 residues: Small ribosomal subunit protein uS4 (180 aa).

The 72-residue stretch at 103 to 174 (RRLQTIVYKK…HPERMMIEKA (72 aa)) folds into the S4 RNA-binding domain.

It belongs to the universal ribosomal protein uS4 family. In terms of assembly, part of the 30S ribosomal subunit. Contacts protein S5. The interaction surface between S4 and S5 is involved in control of translational fidelity.

Its function is as follows. One of the primary rRNA binding proteins, it binds directly to 16S rRNA where it nucleates assembly of the body of the 30S subunit. With S5 and S12 plays an important role in translational accuracy. This Pyrococcus horikoshii (strain ATCC 700860 / DSM 12428 / JCM 9974 / NBRC 100139 / OT-3) protein is Small ribosomal subunit protein uS4.